Consider the following 415-residue polypeptide: SVF1-like protein YDR222W (415 aa).

It belongs to the SVF1 family.

It is found in the cytoplasm. The chain is SVF1-like protein YDR222W from Saccharomyces cerevisiae (strain ATCC 204508 / S288c) (Baker's yeast).